The sequence spans 166 residues: Large ribosomal subunit protein uL10 (166 aa).

The protein belongs to the universal ribosomal protein uL10 family. As to quaternary structure, part of the ribosomal stalk of the 50S ribosomal subunit. The N-terminus interacts with L11 and the large rRNA to form the base of the stalk. The C-terminus forms an elongated spine to which L12 dimers bind in a sequential fashion forming a multimeric L10(L12)X complex.

Functionally, forms part of the ribosomal stalk, playing a central role in the interaction of the ribosome with GTP-bound translation factors. The sequence is that of Large ribosomal subunit protein uL10 from Streptococcus uberis (strain ATCC BAA-854 / 0140J).